The sequence spans 134 residues: Complexin-1 (134 aa).

Disordered regions lie at residues 1 to 60 (MEFV…AERE) and 74 to 113 (KKEEREAEAQAAMEANSEGSLTRPKKAIPPGCGDEVEEED). Residues 15–60 (DMGKMLGGDEEKDPDAAKKEEERQEALRQAEEERKAKYAKMEAERE) are compositionally biased toward basic and acidic residues. Positions 29–69 (DAAKKEEERQEALRQAEEERKAKYAKMEAEREAVRQGIRDK) form a coiled coil. The segment at 48–70 (RKAKYAKMEAEREAVRQGIRDKY) is interaction with the SNARE complex.

It belongs to the complexin/synaphin family. As to quaternary structure, binds to the SNARE core complex containing SNAP25, VAMP2 and STX1A. In terms of tissue distribution, nervous system. In hippocampus and cerebellum, expressed mainly by inhibitory neurons. Overexpressed in substantia nigra from patients with Parkinson disease.

The protein resides in the cytoplasm. It localises to the cytosol. The protein localises to the perikaryon. Its subcellular location is the presynapse. Functionally, positively regulates a late step in exocytosis of various cytoplasmic vesicles, such as synaptic vesicles and other secretory vesicles. Organizes the SNAREs into a cross-linked zigzag topology that, when interposed between the vesicle and plasma membranes, is incompatible with fusion, thereby preventing SNAREs from releasing neurotransmitters until an action potential arrives at the synapse. Also involved in glucose-induced secretion of insulin by pancreatic beta-cells. Essential for motor behavior. The sequence is that of Complexin-1 (CPLX1) from Homo sapiens (Human).